The following is a 427-amino-acid chain: 3-isopropylmalate dehydratase large subunit (427 aa).

Residues C308, C368, and C371 each coordinate [4Fe-4S] cluster.

This sequence belongs to the aconitase/IPM isomerase family. LeuC type 2 subfamily. In terms of assembly, heterodimer of LeuC and LeuD. It depends on [4Fe-4S] cluster as a cofactor.

The enzyme catalyses (2R,3S)-3-isopropylmalate = (2S)-2-isopropylmalate. It participates in amino-acid biosynthesis; L-leucine biosynthesis; L-leucine from 3-methyl-2-oxobutanoate: step 2/4. Functionally, catalyzes the isomerization between 2-isopropylmalate and 3-isopropylmalate, via the formation of 2-isopropylmaleate. This Geobacter metallireducens (strain ATCC 53774 / DSM 7210 / GS-15) protein is 3-isopropylmalate dehydratase large subunit.